Consider the following 555-residue polypeptide: Dihydroxy-acid dehydratase (555 aa).

Cysteine 46 contributes to the [2Fe-2S] cluster binding site. Aspartate 78 serves as a coordination point for Mg(2+). Cysteine 119 contacts [2Fe-2S] cluster. Positions 120 and 121 each coordinate Mg(2+). Residue lysine 121 is modified to N6-carboxylysine. Cysteine 191 is a [2Fe-2S] cluster binding site. A Mg(2+)-binding site is contributed by glutamate 442. Catalysis depends on serine 468, which acts as the Proton acceptor.

This sequence belongs to the IlvD/Edd family. In terms of assembly, homodimer. It depends on [2Fe-2S] cluster as a cofactor. Requires Mg(2+) as cofactor.

The catalysed reaction is (2R)-2,3-dihydroxy-3-methylbutanoate = 3-methyl-2-oxobutanoate + H2O. It carries out the reaction (2R,3R)-2,3-dihydroxy-3-methylpentanoate = (S)-3-methyl-2-oxopentanoate + H2O. Its pathway is amino-acid biosynthesis; L-isoleucine biosynthesis; L-isoleucine from 2-oxobutanoate: step 3/4. It participates in amino-acid biosynthesis; L-valine biosynthesis; L-valine from pyruvate: step 3/4. Functionally, functions in the biosynthesis of branched-chain amino acids. Catalyzes the dehydration of (2R,3R)-2,3-dihydroxy-3-methylpentanoate (2,3-dihydroxy-3-methylvalerate) into 2-oxo-3-methylpentanoate (2-oxo-3-methylvalerate) and of (2R)-2,3-dihydroxy-3-methylbutanoate (2,3-dihydroxyisovalerate) into 2-oxo-3-methylbutanoate (2-oxoisovalerate), the penultimate precursor to L-isoleucine and L-valine, respectively. In Thermus thermophilus (strain ATCC BAA-163 / DSM 7039 / HB27), this protein is Dihydroxy-acid dehydratase.